The chain runs to 49 residues: Osteocalcin (49 aa).

The 47-residue stretch at 1-47 (YLDSGLGAPVPYPDPLEPKREVCELNPNCDELADHIGFQEAYQRFYG) folds into the Gla domain. 4 residues coordinate Ca(2+): Glu17, Glu21, Glu24, and Asp30. Glu17, Glu21, and Glu24 each carry 4-carboxyglutamate. Residues Cys23 and Cys29 are joined by a disulfide bond.

This sequence belongs to the osteocalcin/matrix Gla protein family. Gamma-carboxyglutamate residues are formed by vitamin K dependent carboxylation by GGCX. These residues are essential for the binding of calcium. Decarboxylation promotes the hormone activity.

Its subcellular location is the secreted. Its function is as follows. The carboxylated form is one of the main organic components of the bone matrix, which constitutes 1-2% of the total bone protein. It acts as a negative regulator of bone formation and is required to limit bone formation without impairing bone resorption or mineralization. The carboxylated form binds strongly to apatite and calcium. The uncarboxylated form acts as a hormone secreted by osteoblasts, which regulates different cellular processes, such as energy metabolism, male fertility and brain development. Regulates of energy metabolism by acting as a hormone favoring pancreatic beta-cell proliferation, insulin secretion and sensitivity and energy expenditure. Uncarboxylated osteocalcin hormone also promotes testosterone production in the testes: acts as a ligand for G protein-coupled receptor GPRC6A at the surface of Leydig cells, initiating a signaling response that promotes the expression of enzymes required for testosterone synthesis in a CREB-dependent manner. Also acts as a regulator of brain development: osteocalcin hormone crosses the blood-brain barrier and acts as a ligand for GPR158 on neurons, initiating a signaling response that prevents neuronal apoptosis in the hippocampus, favors the synthesis of all monoamine neurotransmitters and inhibits that of gamma-aminobutyric acid (GABA). Osteocalcin also crosses the placenta during pregnancy and maternal osteocalcin is required for fetal brain development. This is Osteocalcin (BGLAP) from Canis lupus familiaris (Dog).